The sequence spans 480 residues: MVKICCIGAGYVGGPTMAVIALKCPDVEVAVVDISVPRINAWNSDTLPIYEPGLDDVVKQCRGKNLFFSTDVEKHVREADIVFVSVNTPTKTRGLGAGKAADLTYWESAARMIADVSVSDKIVVEKSTVPVKTAEAIEKILTHNSKGIKFQILSNPEFLAEGTAIKDLFNPDRVLIGGRETPEGFKAVQTLKNVYAHWVPEGQIITTNLWSAELSKLAANAFLAQRISSVNAMSALCEATGADVTQVSYAVGTDSRIGPKFLNSSVGFGGSCFQKDILNLVYICECNGLPEVAEYWKQVIKINDYQKSRFVNRVVSSMFNSVSNKKIAVLGFAFKKDTGDTRETPAIDVCKGLLEDKARLSIYDPQVTEDQIQRDLSMNKFDWDHPLHLQPMSPTTVKQVTVTWDAYEATKDAHGICIMTEWDEFKNLDFQKIFDNMQKPAFVFDGRNIMNLQKLREIGFIVYSIGKPLDDWLKDMPAVA.

NAD(+) contacts are provided by residues 8-13, D33, R38, 86-90, 127-128, and E161; these read GAGYVG, VNTPT, and ST. Substrate-binding positions include 157-161, 216-223, and 256-269; these read EFLAE, KLAANAFL, and RIGP…VGFG. The active-site Nucleophile is C272. An NAD(+)-binding site is contributed by 272–275; sequence CFQK. 334–335 is a binding site for substrate; that stretch reads FK. NAD(+) is bound at residue R342. R447 provides a ligand contact to substrate.

Belongs to the UDP-glucose/GDP-mannose dehydrogenase family. As to expression, preferentially expressed in roots.

The enzyme catalyses UDP-alpha-D-glucose + 2 NAD(+) + H2O = UDP-alpha-D-glucuronate + 2 NADH + 3 H(+). It participates in nucleotide-sugar biosynthesis; UDP-alpha-D-glucuronate biosynthesis; UDP-alpha-D-glucuronate from UDP-alpha-D-glucose: step 1/1. With respect to regulation, inhibited by UDP-xylose. Functionally, involved in the biosynthesis of UDP-glucuronic acid (UDP-GlcA), providing nucleotide sugars for cell-wall polymers. Required for the formation of cell wall ingrowths on the outer cell walls of nematode-induced syncytia. This is UDP-glucose 6-dehydrogenase 2 (UGD2) from Arabidopsis thaliana (Mouse-ear cress).